A 389-amino-acid polypeptide reads, in one-letter code: uncharacterized protein (389 aa).

The N-terminal stretch at 1–23 is a signal peptide; sequence MHFAKLGAIGLLGSIICAYAASA.

The protein belongs to the IUNH family.

It localises to the endoplasmic reticulum lumen. This is an uncharacterized protein from Schizosaccharomyces pombe (strain 972 / ATCC 24843) (Fission yeast).